A 398-amino-acid polypeptide reads, in one-letter code: Enoyl-[acyl-carrier-protein] reductase [NADH] (398 aa).

NAD(+) is bound by residues 48–53 (GSSTGY), 74–75 (FE), 111–112 (DA), and 139–140 (LA). Tyr-225 is a binding site for substrate. Tyr-235 functions as the Proton donor in the catalytic mechanism. Residues Lys-244 and 273 to 275 (VVT) each bind NAD(+).

It belongs to the TER reductase family. Monomer.

It catalyses the reaction a 2,3-saturated acyl-[ACP] + NAD(+) = a (2E)-enoyl-[ACP] + NADH + H(+). The protein operates within lipid metabolism; fatty acid biosynthesis. Functionally, involved in the final reduction of the elongation cycle of fatty acid synthesis (FAS II). Catalyzes the reduction of a carbon-carbon double bond in an enoyl moiety that is covalently linked to an acyl carrier protein (ACP). In Pseudomonas paraeruginosa (strain DSM 24068 / PA7) (Pseudomonas aeruginosa (strain PA7)), this protein is Enoyl-[acyl-carrier-protein] reductase [NADH].